The chain runs to 157 residues: Eukaryotic translation initiation factor 5A-1 (157 aa).

Lysine 52 is subject to Hypusine. Residues serine 75 and serine 77 each carry the phosphoserine modification. Threonine 78 is modified (phosphothreonine).

It belongs to the eIF-5A family. Lys-52 undergoes hypusination, a unique post-translational modification that consists in the addition of a butylamino group from spermidine to lysine side chain, leading to the formation of the unusual amino acid hypusine. eIF-5As are the only known proteins to undergo this modification, which is essential for their function.

It is found in the cytoplasm. In terms of biological role, translation factor that promotes translation elongation and termination, particularly upon ribosome stalling at specific amino acid sequence contexts. Binds between the exit (E) and peptidyl (P) site of the ribosome and promotes rescue of stalled ribosome: specifically required for efficient translation of polyproline-containing peptides as well as other motifs that stall the ribosome. Acts as a ribosome quality control (RQC) cofactor by joining the RQC complex to facilitate peptidyl transfer during CAT tailing step. In Schizosaccharomyces pombe (strain 972 / ATCC 24843) (Fission yeast), this protein is Eukaryotic translation initiation factor 5A-1 (tif51a).